The following is an 831-amino-acid chain: Multiphosphoryl transfer protein 1 (831 aa).

Residues 1–90 (MLTIQFLCPL…EYIQVRFIDS (90 aa)) enclose the HPr domain. Catalysis depends on histidine 15, which acts as the Pros-phosphohistidine intermediate; for HPr activity. At histidine 15 the chain carries Phosphohistidine; by EI. Residues 119-650 (GNVLASGVGV…AVKSQLRQLD (532 aa)) form a PTS EI region. The active-site Tele-phosphohistidine intermediate; for PTS EI activity is histidine 298. A Phosphohistidine; by autocatalysis modification is found at histidine 298. Phosphoenolpyruvate-binding residues include arginine 405 and arginine 441. Glutamate 540 and aspartate 564 together coordinate Mg(2+). Residues 563–564 (ND) and arginine 574 contribute to the phosphoenolpyruvate site. The active-site Proton donor; for EI activity is the cysteine 611. A PTS EIIA type-2 domain is found at 685 to 828 (PLLALENIFV…QSILTLLETE (144 aa)). Catalysis depends on histidine 747, which acts as the Tele-phosphohistidine intermediate; for PTS EIIA activity. At histidine 747 the chain carries Phosphohistidine; by HPr.

Belongs to the PEP-utilizing enzyme family. The cofactor is Mg(2+).

The protein localises to the cytoplasm. It catalyses the reaction L-histidyl-[protein] + phosphoenolpyruvate = N(pros)-phospho-L-histidyl-[protein] + pyruvate. It carries out the reaction D-fructose(out) + N(pros)-phospho-L-histidyl-[protein] = D-fructose 1-phosphate(in) + L-histidyl-[protein]. Its function is as follows. Multifunctional protein that includes general (non sugar-specific) and sugar-specific components of the phosphoenolpyruvate-dependent sugar phosphotransferase system (sugar PTS). This major carbohydrate active transport system catalyzes the phosphorylation of incoming sugar substrates concomitantly with their translocation across the cell membrane. The enzyme II FryABC PTS system is involved in fructose transport. The sequence is that of Multiphosphoryl transfer protein 1 (fryA) from Escherichia coli (strain K12).